Consider the following 601-residue polypeptide: MPERELWPAGTGSEPVTRVGSCDSMMSSTSTRSGSSDSSYDFLSTEEKECLLFLEETIGSLDTEADSGLSTDESEPATTPRGFRALPITQPTPRGGPEETITQQGRTPRTVTESSSSHPPEPQGLGLRSGSYSLPRNIHIARSQNFRKSTTQASSHNPGEPGRLAPEPEKEQVSQSSQPRQAPASPQEAALDLDVVLIPPPEAFRDTQPEQCREASLPEGPGQQGHTPQLHTPSSSQEREQTPSEAMSQKAKETVSTRYTQPQPPPAGLPQNARAEDAPLSSGEDPNSRLAPLTTPKPRKLPPNIVLKSSRSSFHSDPQHWLSRHTEAAPGDSGLISCSLQEQRKARKEALEKLGLPQDQDEPGLHLSKPTSSIRPKETRAQHLSPAPGLAQPAAPAQASAAIPAAGKALAQAPAPAPGPAQGPLPMKSPAPGNVAASKSMPISIPKAPRANSALTPPKPESGLTLQESNTPGLRQMNFKSNTLERSGVGLSSYLSTEKDASPKTSTSLGKGSFLDKISPSVLRNSRPRPASLGTGKDFAGIQVGKLADLEQEQSSKRLSYQGQSRDKLPRPPCVSVKISPKGVPNEHRREALKKLGLLKE.

Disordered stretches follow at residues Met1 to Asp41, Glu56 to Asp538, and Glu551 to Glu601. Residues Gly20–Ser39 show a composition bias toward low complexity. Positions Thr100–His118 are enriched in polar residues. 2 positions are modified to phosphoserine: Ser131 and Ser133. The segment covering Arg142 to Asn157 has biased composition (polar residues). Positions Ser174 to Ala190 are enriched in low complexity. The span at Ala203–Arg213 shows a compositional bias: basic and acidic residues. Composition is skewed to polar residues over residues Gln224–Ser236 and Leu307–Ser316. Positions Glu342 to Glu352 are enriched in basic and acidic residues. The segment covering Leu384–Pro414 has biased composition (low complexity). The segment covering Ala415–Ser429 has biased composition (pro residues). A compositionally biased stretch (polar residues) spans Leu464–Glu485. Ser519 carries the phosphoserine modification. The span at Pro585–Glu601 shows a compositional bias: basic and acidic residues.

Belongs to the SARG family. In terms of tissue distribution, highly expressed in prostate.

Its subcellular location is the cytoplasm. Its function is as follows. Putative androgen-specific receptor. The polypeptide is Specifically androgen-regulated gene protein (SARG) (Homo sapiens (Human)).